Reading from the N-terminus, the 252-residue chain is MILHAQAKHGKPGLPWLVFLHGFSGDCHEWQEVGEAFADYSRLYVDLPGHGGSATISVDGFDDVTGLLCKTLVSYNILNFWLVGYSLGGRVAMMAACQEPAGLCGVVVEGGHPGLQNAEQRAERQRSDRQWAQRFRTEPLTAVFADWYQQPVFASLNDDQRRELVALRSNNNGATLAAMLEATSLAVQPDLRANLSARTFAFYYLCGERDSKFRALAAELAADCHVIPRAGHNAHRENPAGVIASLAQILRF.

Belongs to the AB hydrolase superfamily. MenH family. As to quaternary structure, monomer.

The enzyme catalyses 5-enolpyruvoyl-6-hydroxy-2-succinyl-cyclohex-3-ene-1-carboxylate = (1R,6R)-6-hydroxy-2-succinyl-cyclohexa-2,4-diene-1-carboxylate + pyruvate. It participates in quinol/quinone metabolism; 1,4-dihydroxy-2-naphthoate biosynthesis; 1,4-dihydroxy-2-naphthoate from chorismate: step 3/7. The protein operates within quinol/quinone metabolism; menaquinone biosynthesis. Its function is as follows. Catalyzes a proton abstraction reaction that results in 2,5-elimination of pyruvate from 2-succinyl-5-enolpyruvyl-6-hydroxy-3-cyclohexene-1-carboxylate (SEPHCHC) and the formation of 2-succinyl-6-hydroxy-2,4-cyclohexadiene-1-carboxylate (SHCHC). The protein is 2-succinyl-6-hydroxy-2,4-cyclohexadiene-1-carboxylate synthase of Escherichia coli (strain UTI89 / UPEC).